The sequence spans 184 residues: Oocyte-secreted protein 4A (184 aa).

The signal sequence occupies residues Met1 to Gly19. The N-linked (GlcNAc...) asparagine glycan is linked to Asn128.

Belongs to the PLAC1 family.

It is found in the secreted. This is Oocyte-secreted protein 4A from Homo sapiens (Human).